Here is an 878-residue protein sequence, read N- to C-terminus: Alanine--tRNA ligase (878 aa).

Zn(2+) contacts are provided by H570, H574, C672, and H676. Residues 844–864 (GGKGGGGRPDMAQAGGPDASA) form a disordered region. Residues 855 to 864 (AQAGGPDASA) are compositionally biased toward low complexity.

It belongs to the class-II aminoacyl-tRNA synthetase family. It depends on Zn(2+) as a cofactor.

The protein localises to the cytoplasm. The catalysed reaction is tRNA(Ala) + L-alanine + ATP = L-alanyl-tRNA(Ala) + AMP + diphosphate. In terms of biological role, catalyzes the attachment of alanine to tRNA(Ala) in a two-step reaction: alanine is first activated by ATP to form Ala-AMP and then transferred to the acceptor end of tRNA(Ala). Also edits incorrectly charged Ser-tRNA(Ala) and Gly-tRNA(Ala) via its editing domain. In Paramagnetospirillum magneticum (strain ATCC 700264 / AMB-1) (Magnetospirillum magneticum), this protein is Alanine--tRNA ligase.